We begin with the raw amino-acid sequence, 727 residues long: Prolyl endopeptidase-like (727 aa).

Residue methionine 1 is modified to N-acetylmethionine. Active-site charge relay system residues include serine 559, aspartate 645, and histidine 690.

Belongs to the peptidase S9A family. Homodimer. Interacts with the AP-1 complex. As to expression, expressed in pyramidal neurons of the temporal cortex and neocortex (at protein level). Widely expressed. Expressed at higher level in brain, skeletal muscle, heart and kidney. Expressed at the endplates in the neuromuscular junction.

Its subcellular location is the cytoplasm. It localises to the cytosol. The protein localises to the golgi apparatus. It is found in the trans-Golgi network. The protein resides in the cytoskeleton. Its subcellular location is the nucleus. Inhibited by PMSF and Prefabloc, as well as leupeptin at high concentrations. Partially inhibited by TPCK, a chymotrypsin inhibitor and E64, a cysteine protease inhibitor. Not affected by 4-amidinophenyl-methanesulfonyl fluoride (APMSF), pepstatin or EDTA. Inhibited by 1-isobutyl-3-oxo-3,5,6,7-tetrahydro-2H-cyclopenta[c]pyridine-4-carbonitrile. In terms of biological role, serine peptidase whose precise substrate specificity remains unclear. Does not cleave peptides after a arginine or lysine residue. Regulates trans-Golgi network morphology and sorting by regulating the membrane binding of the AP-1 complex. May play a role in the regulation of synaptic vesicle exocytosis. This Homo sapiens (Human) protein is Prolyl endopeptidase-like (PREPL).